The primary structure comprises 844 residues: DNA mismatch repair protein MutS (844 aa).

Glycine 602–serine 609 serves as a coordination point for ATP.

Belongs to the DNA mismatch repair MutS family.

Its function is as follows. This protein is involved in the repair of mismatches in DNA. It is possible that it carries out the mismatch recognition step. This protein has a weak ATPase activity. This Streptococcus pneumoniae (strain ATCC 700669 / Spain 23F-1) protein is DNA mismatch repair protein MutS.